The primary structure comprises 325 residues: Hydroxymethylglutaryl-CoA lyase, mitochondrial (325 aa).

The transit peptide at 1–27 (MAAMRKAVPRRLVGLASLRAVSTSSMG) directs the protein to the mitochondrion. Residues 33–300 (VKIVEVGPRD…HTGVNLQKLL (268 aa)) form the Pyruvate carboxyltransferase domain. R41 serves as a coordination point for substrate. D42 is an a divalent metal cation binding site. An N6-acetyllysine; alternate modification is found at K48. At K48 the chain carries N6-succinyllysine; alternate. An N6-acetyllysine modification is found at K111. Residues K137 and K179 each carry the N6-acetyllysine; alternate modification. K137 and K179 each carry N6-succinyllysine; alternate. A divalent metal cation is bound by residues H233 and H235. C266 is a catalytic residue. N275 contributes to the a divalent metal cation binding site. The Microbody targeting signal motif lies at 323–325 (CKL). K324 bears the N6-acetyllysine mark.

This sequence belongs to the HMG-CoA lyase family. Homodimer; disulfide-linked. Can also form homotetramers.

The protein resides in the mitochondrion matrix. The protein localises to the peroxisome. It catalyses the reaction (3S)-3-hydroxy-3-methylglutaryl-CoA = acetoacetate + acetyl-CoA. It participates in metabolic intermediate metabolism; (S)-3-hydroxy-3-methylglutaryl-CoA degradation; acetoacetate from (S)-3-hydroxy-3-methylglutaryl-CoA: step 1/1. Mitochondrial 3-hydroxy-3-methylglutaryl-CoA lyase that catalyzes a cation-dependent cleavage of (S)-3-hydroxy-3-methylglutaryl-CoA into acetyl-CoA and acetoacetate, a key step in ketogenesis. Terminal step in leucine catabolism. Ketone bodies (beta-hydroxybutyrate, acetoacetate and acetone) are essential as an alternative source of energy to glucose, as lipid precursors and as regulators of metabolism. The chain is Hydroxymethylglutaryl-CoA lyase, mitochondrial (HMGCL) from Pongo abelii (Sumatran orangutan).